Consider the following 599-residue polypeptide: MIDINVNNIFFRSYSVDPNSGHAIYVFDSTYLPASDEIGDKQVYDLLINALMDRLVMKLPQAPYSLVIFSSGFSQRKISWVYGIKMFAKLPKETKFYLQKIFIVHESFFVRSVYQVISNAMNFNFLDSKDSQHDFPSLVHVLDLTSLSELIDITRLRISLNVYLYDYQIREHINVPEEYYNRLTPLAIRQYRQLVFDKIFKKLQNDALLCELIFQKPGNYKKVNIFLDIIKRNNYIDLSQWDIYSLASVWLNYFIKNKAKPLIPIELIPLPIVDDLKFTSETFRKIIKFNQYQDLFMVIIPFFNRIIAHGESTKHDSRTLSKALTPALCKEKLSMMTNDRLAIGSRYIKNLLDFFPEIAKEISSPPSSVSSSSTIPVLPKPRKSSPTRYSELGCLTLPRSRSPSPQRSVTSPTYTPVALQNTPVLKPKSSSRNVSSPSFNAKPPLPIKAVTRPQLSLTSNSNTDLALASSSTDTLSSPTKTPSADSLPLSNSSTDLTISDNIKEMVKDEPAKDKNSVETDIFVQQFESLTLVQNAKIKKFDKELQEKKKKNETTSKTADKFSQKGYSDIKASNKVSRLAALYEERLQGLQVMNEMKQRW.

Residues 181–359 (NRLTPLAIRQ…NLLDFFPEIA (179 aa)) form the Rho-GAP domain. 3 disordered regions span residues 362-447 (ISSP…PLPI), 468-495 (ASSS…SSTD), and 543-563 (ELQE…KFSQ). Low complexity-rich tracts occupy residues 363–373 (SSPPSSVSSSS), 396–413 (TLPR…TSPT), and 468–483 (ASSS…KTPS). Residues 543–562 (ELQEKKKKNETTSKTADKFS) are compositionally biased toward basic and acidic residues.

Its subcellular location is the cytoplasm. In terms of biological role, may be involved in cell wall organization and biogenesis. The chain is Protein ECM25 (ECM25) from Saccharomyces cerevisiae (strain ATCC 204508 / S288c) (Baker's yeast).